We begin with the raw amino-acid sequence, 350 residues long: Phosphotriesterase-related protein (350 aa).

6 residues coordinate a divalent metal cation: His22, His24, Glu169, His201, His230, and Asp298.

It belongs to the metallo-dependent hydrolases superfamily. Phosphotriesterase family. It depends on a divalent metal cation as a cofactor.

This Drosophila erecta (Fruit fly) protein is Phosphotriesterase-related protein.